The following is a 1356-amino-acid chain: Probable aldehyde oxidase 3 (1356 aa).

Residues 10-97 (RAVVVAVNGE…HCAVTTSEGI (88 aa)) form the 2Fe-2S ferredoxin-type domain. Residues C49, C54, C57, and C79 each contribute to the [2Fe-2S] cluster site. The FAD-binding PCMH-type domain maps to 245-437 (VVVTGDGWFH…TFQTFRAAPR (193 aa)). Residues 552 to 576 (NGSFTNGTANGIVDSSPEKHSNVDS) form a disordered region.

This sequence belongs to the xanthine dehydrogenase family. In terms of assembly, aldehyde oxidases (AO) are homodimers and heterodimers of AO subunits. Requires [2Fe-2S] cluster as cofactor. It depends on FAD as a cofactor. The cofactor is Mo-molybdopterin.

The enzyme catalyses an aldehyde + O2 + H2O = a carboxylate + H2O2 + H(+). The sequence is that of Probable aldehyde oxidase 3 from Oryza sativa subsp. japonica (Rice).